Here is a 292-residue protein sequence, read N- to C-terminus: Homoserine kinase (292 aa).

Residue P84–A94 participates in ATP binding.

It belongs to the GHMP kinase family. Homoserine kinase subfamily.

Its subcellular location is the cytoplasm. The enzyme catalyses L-homoserine + ATP = O-phospho-L-homoserine + ADP + H(+). The protein operates within amino-acid biosynthesis; L-threonine biosynthesis; L-threonine from L-aspartate: step 4/5. Its function is as follows. Catalyzes the ATP-dependent phosphorylation of L-homoserine to L-homoserine phosphate. The polypeptide is Homoserine kinase (Campylobacter jejuni subsp. jejuni serotype O:2 (strain ATCC 700819 / NCTC 11168)).